The chain runs to 411 residues: Trigger factor (411 aa).

A PPIase FKBP-type domain is found at 162–240 (EDLVVIDYTT…IKEVKRRQNI (79 aa)).

It belongs to the FKBP-type PPIase family. Tig subfamily.

It is found in the cytoplasm. The enzyme catalyses [protein]-peptidylproline (omega=180) = [protein]-peptidylproline (omega=0). In terms of biological role, involved in protein export. Acts as a chaperone by maintaining the newly synthesized protein in an open conformation. Functions as a peptidyl-prolyl cis-trans isomerase. In Thermodesulfovibrio yellowstonii (strain ATCC 51303 / DSM 11347 / YP87), this protein is Trigger factor.